Here is a 483-residue protein sequence, read N- to C-terminus: GTPase Der (483 aa).

EngA-type G domains are found at residues 3–167 (FTLA…GEER) and 212–387 (LRIA…EIWN). GTP-binding positions include 9–16 (GRPNVGKS), 56–60 (DTAGL), 119–122 (NKAE), 218–225 (GRPNAGKS), 265–269 (DTAGM), and 330–333 (NKWD). In terms of domain architecture, KH-like spans 388 to 472 (RRISTGRLNR…PIRLSLRTSD (85 aa)).

This sequence belongs to the TRAFAC class TrmE-Era-EngA-EngB-Septin-like GTPase superfamily. EngA (Der) GTPase family. In terms of assembly, associates with the 50S ribosomal subunit.

In terms of biological role, GTPase that plays an essential role in the late steps of ribosome biogenesis. In Brucella ovis (strain ATCC 25840 / 63/290 / NCTC 10512), this protein is GTPase Der.